The following is a 171-amino-acid chain: uncharacterized protein (171 aa).

Positions 33-166 constitute an HTH marR-type domain; that stretch reads AISIATNLYR…LTGLLRKVAD (134 aa). The H-T-H motif DNA-binding region spans 80–103; that stretch reads TRKIAELSGISTATASNVIKTLEK.

This is an uncharacterized protein from Bacillus subtilis (strain 168).